Here is a 64-residue protein sequence, read N- to C-terminus: Translational regulator CsrA (64 aa).

It belongs to the CsrA/RsmA family. In terms of assembly, homodimer; the beta-strands of each monomer intercalate to form a hydrophobic core, while the alpha-helices form wings that extend away from the core.

It localises to the cytoplasm. Its function is as follows. A key translational regulator that binds mRNA to regulate translation initiation and/or mRNA stability. Mediates global changes in gene expression, shifting from rapid growth to stress survival by linking envelope stress, the stringent response and the catabolite repression systems. Usually binds in the 5'-UTR; binding at or near the Shine-Dalgarno sequence prevents ribosome-binding, repressing translation, binding elsewhere in the 5'-UTR can activate translation and/or stabilize the mRNA. Its function is antagonized by small RNA(s). This Methylococcus capsulatus (strain ATCC 33009 / NCIMB 11132 / Bath) protein is Translational regulator CsrA.